The sequence spans 77 residues: RNA-binding protein Hfq (77 aa).

Residues Asp9–Ile68 form the Sm domain.

The protein belongs to the Hfq family. In terms of assembly, homohexamer.

RNA chaperone that binds small regulatory RNA (sRNAs) and mRNAs to facilitate mRNA translational regulation in response to envelope stress, environmental stress and changes in metabolite concentrations. Also binds with high specificity to tRNAs. This chain is RNA-binding protein Hfq, found in Psychromonas ingrahamii (strain DSM 17664 / CCUG 51855 / 37).